A 374-amino-acid polypeptide reads, in one-letter code: Aminomethyltransferase (374 aa).

The protein belongs to the GcvT family. The glycine cleavage system is composed of four proteins: P, T, L and H.

It carries out the reaction N(6)-[(R)-S(8)-aminomethyldihydrolipoyl]-L-lysyl-[protein] + (6S)-5,6,7,8-tetrahydrofolate = N(6)-[(R)-dihydrolipoyl]-L-lysyl-[protein] + (6R)-5,10-methylene-5,6,7,8-tetrahydrofolate + NH4(+). Its function is as follows. The glycine cleavage system catalyzes the degradation of glycine. This is Aminomethyltransferase from Prochlorococcus marinus (strain MIT 9313).